The following is a 101-amino-acid chain: Urease subunit beta (101 aa).

The protein belongs to the urease beta subunit family. In terms of assembly, heterotrimer of UreA (gamma), UreB (beta) and UreC (alpha) subunits. Three heterotrimers associate to form the active enzyme.

Its subcellular location is the cytoplasm. The enzyme catalyses urea + 2 H2O + H(+) = hydrogencarbonate + 2 NH4(+). It functions in the pathway nitrogen metabolism; urea degradation; CO(2) and NH(3) from urea (urease route): step 1/1. This is Urease subunit beta from Sinorhizobium medicae (strain WSM419) (Ensifer medicae).